Here is a 250-residue protein sequence, read N- to C-terminus: ATP synthase subunit a (250 aa).

Transmembrane regions (helical) follow at residues 27–47 (TDTV…AFYL), 83–103 (IAPF…ISNW), 129–149 (INYV…AGIW), 191–211 (IFAG…IMWA), and 219–239 (FDLF…ILYF).

Belongs to the ATPase A chain family. As to quaternary structure, F-type ATPases have 2 components, CF(1) - the catalytic core - and CF(0) - the membrane proton channel. CF(1) has five subunits: alpha(3), beta(3), gamma(1), delta(1), epsilon(1). CF(0) has three main subunits: a(1), b(2) and c(9-12). The alpha and beta chains form an alternating ring which encloses part of the gamma chain. CF(1) is attached to CF(0) by a central stalk formed by the gamma and epsilon chains, while a peripheral stalk is formed by the delta and b chains.

Its subcellular location is the cell membrane. Functionally, key component of the proton channel; it plays a direct role in the translocation of protons across the membrane. The chain is ATP synthase subunit a from Mycobacterium marinum (strain ATCC BAA-535 / M).